Here is a 221-residue protein sequence, read N- to C-terminus: Eukaryotic translation initiation factor 3 subunit K (221 aa).

Residues 46-207 enclose the PCI domain; that stretch reads YDLEANLACL…NIKTKHITEK (162 aa).

The protein belongs to the eIF-3 subunit K family. Component of the eukaryotic translation initiation factor 3 (eIF-3) complex.

Its subcellular location is the cytoplasm. Functionally, component of the eukaryotic translation initiation factor 3 (eIF-3) complex, which is involved in protein synthesis of a specialized repertoire of mRNAs and, together with other initiation factors, stimulates binding of mRNA and methionyl-tRNAi to the 40S ribosome. The eIF-3 complex specifically targets and initiates translation of a subset of mRNAs involved in cell proliferation. This chain is Eukaryotic translation initiation factor 3 subunit K, found in Culex quinquefasciatus (Southern house mosquito).